The sequence spans 587 residues: Aspartate--tRNA ligase (587 aa).

Residue Glu-175 coordinates L-aspartate. The aspartate stretch occupies residues 199–202; the sequence is QQFK. L-aspartate contacts are provided by Arg-221 and His-446. 221 to 223 is an ATP binding site; it reads RDE. Glu-480 provides a ligand contact to ATP. L-aspartate is bound at residue Arg-487. 532–535 lines the ATP pocket; it reads GVDR.

Belongs to the class-II aminoacyl-tRNA synthetase family. Type 1 subfamily. As to quaternary structure, homodimer.

The protein localises to the cytoplasm. It catalyses the reaction tRNA(Asp) + L-aspartate + ATP = L-aspartyl-tRNA(Asp) + AMP + diphosphate. Its function is as follows. Catalyzes the attachment of L-aspartate to tRNA(Asp) in a two-step reaction: L-aspartate is first activated by ATP to form Asp-AMP and then transferred to the acceptor end of tRNA(Asp). This Streptomyces coelicolor (strain ATCC BAA-471 / A3(2) / M145) protein is Aspartate--tRNA ligase.